We begin with the raw amino-acid sequence, 229 residues long: Enolase-phosphatase E1 (229 aa).

It belongs to the HAD-like hydrolase superfamily. MasA/MtnC family. As to quaternary structure, monomer. The cofactor is Mg(2+).

It carries out the reaction 5-methylsulfanyl-2,3-dioxopentyl phosphate + H2O = 1,2-dihydroxy-5-(methylsulfanyl)pent-1-en-3-one + phosphate. It functions in the pathway amino-acid biosynthesis; L-methionine biosynthesis via salvage pathway; L-methionine from S-methyl-5-thio-alpha-D-ribose 1-phosphate: step 3/6. The protein operates within amino-acid biosynthesis; L-methionine biosynthesis via salvage pathway; L-methionine from S-methyl-5-thio-alpha-D-ribose 1-phosphate: step 4/6. Bifunctional enzyme that catalyzes the enolization of 2,3-diketo-5-methylthiopentyl-1-phosphate (DK-MTP-1-P) into the intermediate 2-hydroxy-3-keto-5-methylthiopentenyl-1-phosphate (HK-MTPenyl-1-P), which is then dephosphorylated to form the acireductone 1,2-dihydroxy-3-keto-5-methylthiopentene (DHK-MTPene). The sequence is that of Enolase-phosphatase E1 from Pectobacterium atrosepticum (strain SCRI 1043 / ATCC BAA-672) (Erwinia carotovora subsp. atroseptica).